Here is a 129-residue protein sequence, read N- to C-terminus: Large ribosomal subunit protein bL12 (129 aa).

Belongs to the bacterial ribosomal protein bL12 family. Homodimer. Part of the ribosomal stalk of the 50S ribosomal subunit. Forms a multimeric L10(L12)X complex, where L10 forms an elongated spine to which 2 to 4 L12 dimers bind in a sequential fashion. Binds GTP-bound translation factors.

Functionally, forms part of the ribosomal stalk which helps the ribosome interact with GTP-bound translation factors. Is thus essential for accurate translation. The sequence is that of Large ribosomal subunit protein bL12 from Pelotomaculum thermopropionicum (strain DSM 13744 / JCM 10971 / SI).